We begin with the raw amino-acid sequence, 413 residues long: Monacolin J acid methylbutanoyltransferase (413 aa).

R73 is a binding site for monacolin J. S76 functions as the Acyl-ester intermediate in the catalytic mechanism. 3 residues coordinate monacolin J: R173, Y188, and Y258. A 2-methylbutanoate-binding site is contributed by G366. Residues E388 and W390 each contribute to the monacolin J site.

It belongs to the class-A beta-lactamase family. Interacts with LovF.

It carries out the reaction monacolin J carboxylate + (S)-2-methylbutanoyl-[2-methylbutanoate polyketide synthase] = lovastatin carboxylate + holo-[2-methylbutanoate polyketide synthase]. It participates in polyketide biosynthesis; lovastatin biosynthesis. Functionally, monacolin J acid methylbutanoyltransferase; part of the gene cluster that mediates the biosynthesis of lovastatin (also known as mevinolin, mevacor or monacolin K), a hypolipidemic inhibitor of (3S)-hydroxymethylglutaryl-coenzyme A (HMG-CoA) reductase (HMGR). The first step in the biosynthesis of lovastatin is the production of dihydromonacolin L acid by the lovastatin nonaketide synthase lovB and the trans-acting enoyl reductase lovC via condensation of one acetyl-CoA unit and 8 malonyl-CoA units. Dihydromonacolin L acid is released from lovB by the thioesterase lovG. Next, dihydromonacolin L acid is oxidized by the dihydromonacolin L monooxygenase lovA twice to form monacolin J acid. The 2-methylbutyrate moiety of lovastatin is synthesized by the lovastatin diketide synthase lovF via condensation of one acetyl-CoA unit and one malonyl-CoA unit. Finally, the covalent attachment of this moiety to monacolin J acid is catalyzed by the transesterase lovD to yield lovastatin. LovD has broad substrate specificity and can also convert monacolin J to simvastatin using alpha-dimethylbutanoyl-S-methyl-3-mercaptopropionate (DMB-S-MMP) as the thioester acyl donor, and can also catalyze the reverse reaction and function as hydrolase in vitro. LovD has much higher activity with LovF-bound 2-methylbutanoate than with free diketide substrates. The polypeptide is Monacolin J acid methylbutanoyltransferase (Aspergillus terreus (strain NIH 2624 / FGSC A1156)).